Here is a 447-residue protein sequence, read N- to C-terminus: Putative FBD-associated F-box protein At1g61330 (447 aa).

The F-box domain occupies 10–57 (KLIKRLSDELVECILSFLPVQSTLQHRVLSKRYRDTWKLSRDLDFSGI). The FBD domain maps to 384-416 (VKIIGYKGHWHELDIVEFFVKNAPSLKRLELQM).

The protein is Putative FBD-associated F-box protein At1g61330 of Arabidopsis thaliana (Mouse-ear cress).